The following is a 700-amino-acid chain: DNA ligase 2 (700 aa).

NAD(+) contacts are provided by residues 42–46 and 89–90; these read DDAYD and SL. Lysine 122 acts as the N6-AMP-lysine intermediate in catalysis. Arginine 143, glutamate 177, lysine 303, and lysine 327 together coordinate NAD(+). Zn(2+)-binding residues include cysteine 421, cysteine 424, cysteine 437, and cysteine 443. Residues 590 to 621 are disordered; that stretch reads MTEPGATPPRPADTDGADGATAEAPGDGGPLA. The BRCT domain maps to 615 to 700; sequence GDGGPLAGMK…FAVLVAGLLS (86 aa).

The protein belongs to the NAD-dependent DNA ligase family. LigA subfamily. Mg(2+) is required as a cofactor. Requires Mn(2+) as cofactor.

The catalysed reaction is NAD(+) + (deoxyribonucleotide)n-3'-hydroxyl + 5'-phospho-(deoxyribonucleotide)m = (deoxyribonucleotide)n+m + AMP + beta-nicotinamide D-nucleotide.. Its function is as follows. DNA ligase that catalyzes the formation of phosphodiester linkages between 5'-phosphoryl and 3'-hydroxyl groups in double-stranded DNA using NAD as a coenzyme and as the energy source for the reaction. It is essential for DNA replication and repair of damaged DNA. This chain is DNA ligase 2, found in Streptomyces coelicolor (strain ATCC BAA-471 / A3(2) / M145).